Consider the following 1312-residue polypeptide: Cyclic GMP-binding protein D (1312 aa).

The region spanning 26 to 155 (GFSAIKSCSL…EFFKAKKMAR (130 aa)) is the N-terminal Ras-GEF domain. Low complexity-rich tracts occupy residues 206–236 (NTMN…SSPN) and 275–296 (NGTS…LFNQ). Disordered regions lie at residues 206–244 (NTMN…RSSM) and 260–326 (NFNN…NNVN). Over residues 297 to 310 (QPSLSMLNDDGSVQ) the composition is skewed to polar residues. Residues 311-326 (NNNNNNNNNNNNNNVN) show a composition bias toward low complexity. Positions 353–582 (LPEAIAKELT…FRLSKIREET (230 aa)) constitute a Ras-GEF domain. The tract at residues 586–658 (QSLKESNGIG…NCGNGSGISS (73 aa)) is disordered. Residues 591-612 (SNGIGNSNSTSGGSSSSLVNKD) show a composition bias toward low complexity. A compositionally biased stretch (gly residues) spans 613 to 625 (GSGGGGGSGGGGS). Residues 630 to 644 (GDGKGDGKDNRDGRG) are compositionally biased toward basic and acidic residues. Over residues 646–657 (GNSNCGNGSGIS) the composition is skewed to low complexity. An a nucleoside 3',5'-cyclic phosphate-binding site is contributed by 698–857 (VSSTLSEREW…ATFYKFIGVI (160 aa)). Residues 940 to 1006 (SSFRTKFGLS…DKILTVDKNI (67 aa)) form the GRAM domain. Residues 1059–1087 (QQQQPSQQPSQQQSQSSQLQQSVSASSTT) are compositionally biased toward low complexity. Disordered stretches follow at residues 1059–1108 (QQQQ…IKDL) and 1167–1210 (NNIN…NSSI). Residues 1105-1218 (IKDL…SNTS) and 1182-1303 (NNNN…LACV) each bind a nucleoside 3',5'-cyclic phosphate.

Functionally, promotes the exchange of Ras-bound GDP by GTP. Induces the formation of substrate-attached pseudopodia, that leads to increased adhesion and thereby negatively influencing cell speed and polarity. The chain is Cyclic GMP-binding protein D (gbpD) from Dictyostelium discoideum (Social amoeba).